The sequence spans 228 residues: Protein-L-isoaspartate O-methyltransferase (228 aa).

The interval 1–20 is disordered; sequence MVAVSLKMSQPAAPPPPMGE. Ser76 is an active-site residue.

This sequence belongs to the methyltransferase superfamily. L-isoaspartyl/D-aspartyl protein methyltransferase family.

The protein resides in the cytoplasm. The enzyme catalyses [protein]-L-isoaspartate + S-adenosyl-L-methionine = [protein]-L-isoaspartate alpha-methyl ester + S-adenosyl-L-homocysteine. Its function is as follows. Catalyzes the methyl esterification of L-isoaspartyl residues in peptides and proteins that result from spontaneous decomposition of normal L-aspartyl and L-asparaginyl residues. It plays a role in the repair and/or degradation of damaged proteins. In Magnetococcus marinus (strain ATCC BAA-1437 / JCM 17883 / MC-1), this protein is Protein-L-isoaspartate O-methyltransferase.